We begin with the raw amino-acid sequence, 77 residues long: Acyl carrier protein (77 aa).

The region spanning 1 to 76 (MAVFDEVKDV…DVVNYIDGLK (76 aa)) is the Carrier domain. O-(pantetheine 4'-phosphoryl)serine is present on S36.

This sequence belongs to the acyl carrier protein (ACP) family. Post-translationally, 4'-phosphopantetheine is transferred from CoA to a specific serine of apo-ACP by AcpS. This modification is essential for activity because fatty acids are bound in thioester linkage to the sulfhydryl of the prosthetic group.

The protein resides in the cytoplasm. The protein operates within lipid metabolism; fatty acid biosynthesis. Functionally, carrier of the growing fatty acid chain in fatty acid biosynthesis. The protein is Acyl carrier protein of Campylobacter fetus subsp. fetus (strain 82-40).